A 55-amino-acid polypeptide reads, in one-letter code: Ferredoxin (55 aa).

4Fe-4S ferredoxin-type domains follow at residues 2 to 27 (FVIN…TQGD) and 28 to 55 (TQFV…PNQE). [4Fe-4S] cluster is bound by residues Cys8, Cys11, Cys14, Cys18, Cys37, Cys40, Cys43, and Cys47.

[4Fe-4S] cluster serves as cofactor.

In terms of biological role, ferredoxins are iron-sulfur proteins that transfer electrons in a wide variety of metabolic reactions. The polypeptide is Ferredoxin (Clostridium butyricum).